Here is a 373-residue protein sequence, read N- to C-terminus: Mating-type protein A-2 (373 aa).

Positions 1–22 (MNLLNMQPKRSEQPAMFEENRA) are disordered.

The protein to P.anserina SMR1.

In terms of biological role, required, together with mating-type protein A-3, for efficient ascospore formation. This is Mating-type protein A-2 (matA-2) from Neurospora crassa (strain ATCC 24698 / 74-OR23-1A / CBS 708.71 / DSM 1257 / FGSC 987).